Reading from the N-terminus, the 88-residue chain is Small ribosomal subunit protein uS15 (88 aa).

It belongs to the universal ribosomal protein uS15 family. Part of the 30S ribosomal subunit. Forms a bridge to the 50S subunit in the 70S ribosome, contacting the 23S rRNA.

Its function is as follows. One of the primary rRNA binding proteins, it binds directly to 16S rRNA where it helps nucleate assembly of the platform of the 30S subunit by binding and bridging several RNA helices of the 16S rRNA. Functionally, forms an intersubunit bridge (bridge B4) with the 23S rRNA of the 50S subunit in the ribosome. This chain is Small ribosomal subunit protein uS15, found in Leptospira borgpetersenii serovar Hardjo-bovis (strain JB197).